Reading from the N-terminus, the 962-residue chain is Ubiquitin carboxyl-terminal hydrolase 4 (962 aa).

The DUSP domain occupies 11 to 122 (PDVETQKTEL…GQQPIVRKVV (112 aa)). Residues 27–216 (TLQRGAQWYL…LYQGQVLVIE (190 aa)) are necessary for interaction with SART3. Positions 133-141 (VEVYLLELK) match the Nuclear export signal motif. The 85-residue stretch at 142–226 (LCENSDPTNV…PQNEDGTWPR (85 aa)) folds into the Ubiquitin-like 1 domain. The tract at residues 220–249 (EDGTWPRQSLQSKSSTAPSRNFTTSSKPSA) is disordered. The span at 225 to 249 (PRQSLQSKSSTAPSRNFTTSSKPSA) shows a compositional bias: polar residues. A required for USP4 activation by providing conformational flexibility between the DUSP and catalytic domains region spans residues 229-295 (LQSKSSTAPS…SYNCQEPPSP (67 aa)). A USP domain is found at 302 to 922 (CGLGNLGNTC…AAYVLFYQRR (621 aa)). Catalysis depends on Cys311, which acts as the Nucleophile. The segment at 384-386 (PQF) is regulates ubiquitin dissociation. The necessary for interaction with RBL2 stretch occupies residues 405 to 407 (LHE). The residue at position 445 (Ser445) is a Phosphoserine. Positions 459-463 (LVCPE) are necessary for interaction with RB1 and RBL2. 2 residues coordinate Zn(2+): Cys461 and Cys464. The region spanning 483-571 (LKKDRIMEVF…IFVYEVCNTS (89 aa)) is the Ubiquitin-like 2 domain. Residues 485-774 (KDRIMEVFLV…SQPQKKKKAA (290 aa)) are interacts with DUSP and ubiquitin-like 1 domains and is required for USP4 activation. The segment at 638–699 (EFLSSPLEPG…SESAQKVKGQ (62 aa)) is disordered. The residue at position 655 (Ser655) is a Phosphoserine. Positions 657–666 (EGDEEEEMDH) are enriched in acidic residues. A phosphoserine mark is found at Ser675 and Ser680. The Nuclear localization signal signature appears at 766 to 771 (QPQKKK). Zn(2+) is bound by residues Cys798 and Cys801. His880 functions as the Proton acceptor in the catalytic mechanism. Over residues 928–937 (STSSLGSFPG) the composition is skewed to low complexity. The tract at residues 928 to 962 (STSSLGSFPGSDGGVKLSSSHQGMGDEEAYNMDTN) is disordered. Over residues 952–962 (GDEEAYNMDTN) the composition is skewed to acidic residues.

It belongs to the peptidase C19 family. USP4 subfamily. In terms of assembly, interacts with RB1 (both dephosphorylated and hypophosphorylated forms). Interacts with RBL1 and RBL2. Interacts with ADORA2A (via cytoplasmic C-terminus); the interaction is direct. Interacts with SART3; recruits USP4 to its substrate PRPF3. Phosphorylated at Ser-445 by PKB/AKT1 in response to EGF stimulus, promoting its ability deubiquitinate RHEB. In terms of processing, monoubiquitinated by TRIM21. Ubiquitination does not lead to its proteasomal degradation. Autodeubiquitinated. Expressed in brain, kidney, liver and spleen (at protein level).

The protein resides in the cytoplasm. It is found in the nucleus. The enzyme catalyses Thiol-dependent hydrolysis of ester, thioester, amide, peptide and isopeptide bonds formed by the C-terminal Gly of ubiquitin (a 76-residue protein attached to proteins as an intracellular targeting signal).. Its activity is regulated as follows. The completion of the deubiquitinase reaction is mediated by the DUSP and ubiquitin-like 1 domains which promotes the release of ubiquitin from the catalytic site enabling subsequent reactions to occur. In terms of biological role, deubiquitinating enzyme that removes conjugated ubiquitin from target proteins. Deubiquitinates PDPK1. Deubiquitinates TRIM21. Deubiquitinates receptor ADORA2A which increases the amount of functional receptor at the cell surface. Deubiquitinates HAS2. Deubiquitinates RHEB in response to EGF signaling, promoting mTORC1 signaling. May regulate mRNA splicing through deubiquitination of the U4 spliceosomal protein PRPF3. This may prevent its recognition by the U5 component PRPF8 thereby destabilizing interactions within the U4/U6.U5 snRNP. May also play a role in the regulation of quality control in the ER. The chain is Ubiquitin carboxyl-terminal hydrolase 4 (Usp4) from Mus musculus (Mouse).